A 228-amino-acid polypeptide reads, in one-letter code: UPF0056 membrane protein MJ0972 (228 aa).

5 helical membrane passes run 22–42 (FYIYGFVSLFITIDPIGLIPI), 68–88 (VVLLLFALFGNYIFGYFGITI), 133–153 (VPLAIPLISGPGAITTTMILI), 163–183 (GVVVLSILSAMLVSGIILSLT), and 201–221 (IMGLLLVAISVQIIFTGIVGL).

This sequence belongs to the UPF0056 (MarC) family.

It localises to the cell membrane. The sequence is that of UPF0056 membrane protein MJ0972 from Methanocaldococcus jannaschii (strain ATCC 43067 / DSM 2661 / JAL-1 / JCM 10045 / NBRC 100440) (Methanococcus jannaschii).